Here is a 574-residue protein sequence, read N- to C-terminus: Secreted lipase 1 (574 aa).

The signal sequence occupies residues 1–17; the sequence is MKLSLVPIFALLSTAFA. Cys-95 and Cys-132 form a disulfide bridge. Residue Ser-244 is the Acyl-ester intermediate of the active site. A disulfide bridge connects residues Cys-303 and Cys-312. A glycan (N-linked (GlcNAc...) asparagine) is linked at Asn-323. Glu-376 acts as the Charge relay system in catalysis. Asn-386 carries an N-linked (GlcNAc...) asparagine glycan. The Charge relay system role is filled by His-489. The N-linked (GlcNAc...) asparagine glycan is linked to Asn-524.

This sequence belongs to the type-B carboxylesterase/lipase family.

The protein localises to the secreted. It carries out the reaction a carboxylic ester + H2O = an alcohol + a carboxylate + H(+). In terms of biological role, secreted lipase that allows the use of hydrolyzed lipids as carbon sources. Has highest activity with methyl umbelliferyl oleate (C18:1), whereas much lower activities are obtained with the respective esters of palmitate (C16:0) and stearate (C18:0) (24% and 12% of the activity obtained with umbelliferyl oleate, respectively). Hydrolyzes 1- and 3-positioned ester bonds in preference to 2-positioned ester bonds. The production rate of monoglycerides is lower than that of diacylglycerides. Seems not required for the penetration of intact host tissue. The sequence is that of Secreted lipase 1 from Botryotinia fuckeliana (strain B05.10) (Noble rot fungus).